Reading from the N-terminus, the 729-residue chain is Fatty acid oxidation complex subunit alpha (729 aa).

Residues 1–189 form an enoyl-CoA hydratase/isomerase region; sequence MLYKGDTLYL…KIGLVDGVVK (189 aa). Asp296 serves as a coordination point for substrate. Positions 311–729 are 3-hydroxyacyl-CoA dehydrogenase; the sequence is ETPKQAAVLG…ARPVGSLKTA (419 aa). Residues Met324, Asp343, 400–402, Lys407, and Ser429 each bind NAD(+); that span reads VVE. His450 acts as the For 3-hydroxyacyl-CoA dehydrogenase activity in catalysis. An NAD(+)-binding site is contributed by Asn453. Substrate contacts are provided by Asn500 and Tyr660. Positions 708–729 are disordered; it reads RHNEPYYPPVEPARPVGSLKTA.

This sequence in the N-terminal section; belongs to the enoyl-CoA hydratase/isomerase family. The protein in the C-terminal section; belongs to the 3-hydroxyacyl-CoA dehydrogenase family. In terms of assembly, heterotetramer of two alpha chains (FadB) and two beta chains (FadA).

The catalysed reaction is a (3S)-3-hydroxyacyl-CoA + NAD(+) = a 3-oxoacyl-CoA + NADH + H(+). The enzyme catalyses a (3S)-3-hydroxyacyl-CoA = a (2E)-enoyl-CoA + H2O. It carries out the reaction a 4-saturated-(3S)-3-hydroxyacyl-CoA = a (3E)-enoyl-CoA + H2O. It catalyses the reaction (3S)-3-hydroxybutanoyl-CoA = (3R)-3-hydroxybutanoyl-CoA. The catalysed reaction is a (3Z)-enoyl-CoA = a 4-saturated (2E)-enoyl-CoA. The enzyme catalyses a (3E)-enoyl-CoA = a 4-saturated (2E)-enoyl-CoA. It functions in the pathway lipid metabolism; fatty acid beta-oxidation. Functionally, involved in the aerobic and anaerobic degradation of long-chain fatty acids via beta-oxidation cycle. Catalyzes the formation of 3-oxoacyl-CoA from enoyl-CoA via L-3-hydroxyacyl-CoA. It can also use D-3-hydroxyacyl-CoA and cis-3-enoyl-CoA as substrate. The protein is Fatty acid oxidation complex subunit alpha of Salmonella typhimurium (strain LT2 / SGSC1412 / ATCC 700720).